The primary structure comprises 239 residues: Fatty acid metabolism regulator protein (239 aa).

The region spanning 6-74 (QSPAGFAEEY…HGKPTKINNF (69 aa)) is the HTH gntR-type domain. The H-T-H motif DNA-binding region spans 34 to 53 (ERELSELIGVTRTTLREVLQ).

In terms of assembly, homodimer.

The protein resides in the cytoplasm. Functionally, multifunctional regulator of fatty acid metabolism. The protein is Fatty acid metabolism regulator protein of Pectobacterium carotovorum subsp. carotovorum (strain PC1).